The sequence spans 239 residues: MTINALLLSSSRVGDTPYLAHAIPFIKPLTTNARKWIFIPYAGVSMSYDTYLASVVTGLSGLELDISGIHQHPDPQQAIKDADGILIGGGNTFHLLHQLYRYDLVTLIGEQVALGKPYIGWSAGSNVSGLSIRTTNDMPIIEPPSFNALNLVPFQLNPHYSNYQAPGHNGETRAQRLLEFTKVDPLTPVVGIVEGSALWRQGDKLSLLGNQPAYLFCGEQQEIPIPVGSDLSNLLKPSL.

Active-site charge relay system residues include serine 122, aspartate 137, and histidine 159.

It belongs to the peptidase S51 family.

The protein resides in the cytoplasm. It catalyses the reaction Dipeptidase E catalyzes the hydrolysis of dipeptides Asp-|-Xaa. It does not act on peptides with N-terminal Glu, Asn or Gln, nor does it cleave isoaspartyl peptides.. In terms of biological role, hydrolyzes dipeptides containing N-terminal aspartate residues. May play a role in allowing the cell to use peptide aspartate to spare carbon otherwise required for the synthesis of the aspartate family of amino acids. The sequence is that of Peptidase E from Shewanella baltica (strain OS195).